A 612-amino-acid chain; its full sequence is BTB/POZ domain-containing protein 9 (612 aa).

The BTB domain maps to 36-104 (GDVTFVVEKK…IYTGRATLTD (69 aa)). In terms of domain architecture, BACK spans 142–240 (VCMTFDVASL…SLTELLNVVR (99 aa)). A disordered region spans residues 559-612 (QQSTQKEDSSEEPGTGDLSTPSQQLDPHAPRAPSASSLPPSPGPNLHSPNQQNQ). The segment covering 589–612 (RAPSASSLPPSPGPNLHSPNQQNQ) has biased composition (low complexity).

As to expression, detected throughout the gray matter of the spinal cord including the motor neurons (at protein level). In the brain, detected in the neurons of the hippocampus and in the Purkinje cells of the cerebellum (at protein level). Also detected in the terospenial cortex, bed nucleus of the stria terminalis (BST) and the ventrolateral thalamus (VL) (at protein level).

The chain is BTB/POZ domain-containing protein 9 (Btbd9) from Rattus norvegicus (Rat).